The following is an 82-amino-acid chain: Protein WFDC11 (82 aa).

Residues 1 to 21 (MKPSWFPCLVFLCMLLLSALG) form the signal peptide.

The protein resides in the secreted. The sequence is that of Protein WFDC11 (Wfdc11) from Mus musculus (Mouse).